The sequence spans 424 residues: Probable threonylcarbamoyladenosine tRNA methylthiotransferase (424 aa).

Residues isoleucine 4 to asparagine 115 enclose the MTTase N-terminal domain. Positions 13, 48, 79, 150, 154, and 157 each coordinate [4Fe-4S] cluster. The 230-residue stretch at arginine 136 to glutamate 365 folds into the Radical SAM core domain. The region spanning arginine 368–aspartate 424 is the TRAM domain.

It belongs to the methylthiotransferase family. CDKAL1 subfamily. [4Fe-4S] cluster serves as cofactor.

The catalysed reaction is N(6)-L-threonylcarbamoyladenosine(37) in tRNA + (sulfur carrier)-SH + AH2 + 2 S-adenosyl-L-methionine = 2-methylsulfanyl-N(6)-L-threonylcarbamoyladenosine(37) in tRNA + (sulfur carrier)-H + 5'-deoxyadenosine + L-methionine + A + S-adenosyl-L-homocysteine + 2 H(+). Its function is as follows. Catalyzes the methylthiolation of N6-threonylcarbamoyladenosine (t(6)A), leading to the formation of 2-methylthio-N6-threonylcarbamoyladenosine (ms(2)t(6)A) at position 37 in tRNAs that read codons beginning with adenine. The chain is Probable threonylcarbamoyladenosine tRNA methylthiotransferase from Methanothermobacter thermautotrophicus (strain ATCC 29096 / DSM 1053 / JCM 10044 / NBRC 100330 / Delta H) (Methanobacterium thermoautotrophicum).